The chain runs to 391 residues: Glycerol-3-phosphate dehydrogenase [NAD(+)] 1 (391 aa).

NAD(+) is bound by residues 41–46 (GSGNWG), Phe-129, Lys-152, and Ala-185. Lys-152 lines the substrate pocket. The Proton acceptor role is filled by Lys-245. NAD(+) contacts are provided by Arg-310 and Gln-339. Position 310–311 (310–311 (RN)) interacts with substrate.

This sequence belongs to the NAD-dependent glycerol-3-phosphate dehydrogenase family.

The protein localises to the cytoplasm. The enzyme catalyses sn-glycerol 3-phosphate + NAD(+) = dihydroxyacetone phosphate + NADH + H(+). This is Glycerol-3-phosphate dehydrogenase [NAD(+)] 1 (GPD1) from Saccharomyces uvarum (Yeast).